The chain runs to 428 residues: Enolase (428 aa).

(2R)-2-phosphoglycerate is bound at residue glutamine 162. The Proton donor role is filled by glutamate 204. Aspartate 241, glutamate 283, and aspartate 310 together coordinate Mg(2+). The (2R)-2-phosphoglycerate site is built by lysine 335, arginine 364, serine 365, and lysine 386. Lysine 335 acts as the Proton acceptor in catalysis.

It belongs to the enolase family. Mg(2+) is required as a cofactor.

Its subcellular location is the cytoplasm. The protein resides in the secreted. It localises to the cell surface. The enzyme catalyses (2R)-2-phosphoglycerate = phosphoenolpyruvate + H2O. It functions in the pathway carbohydrate degradation; glycolysis; pyruvate from D-glyceraldehyde 3-phosphate: step 4/5. Catalyzes the reversible conversion of 2-phosphoglycerate (2-PG) into phosphoenolpyruvate (PEP). It is essential for the degradation of carbohydrates via glycolysis. This Rhodococcus erythropolis (strain PR4 / NBRC 100887) protein is Enolase.